The primary structure comprises 284 residues: Nucleotide-binding protein Shewmr7_3352 (284 aa).

8–15 (GRSGSGKS) is a binding site for ATP. 56 to 59 (DVRN) is a GTP binding site.

It belongs to the RapZ-like family.

Functionally, displays ATPase and GTPase activities. The sequence is that of Nucleotide-binding protein Shewmr7_3352 from Shewanella sp. (strain MR-7).